Consider the following 288-residue polypeptide: Pyruvate synthase subunit PorB (288 aa).

Residues Cys-16, Cys-19, and Cys-44 each coordinate [4Fe-4S] cluster. A compositionally biased stretch (polar residues) spans 137–148; that stretch reads STPYGASTTTSP. Positions 137-159 are disordered; that stretch reads STPYGASTTTSPHGKESFGEDRP. A compositionally biased stretch (basic and acidic residues) spans 149–159; it reads HGKESFGEDRP. Cys-208 provides a ligand contact to [4Fe-4S] cluster.

In terms of assembly, heterotetramer of one alpha, one beta, one delta and one gamma chain. Requires [4Fe-4S] cluster as cofactor.

It catalyses the reaction 2 oxidized [2Fe-2S]-[ferredoxin] + pyruvate + CoA = 2 reduced [2Fe-2S]-[ferredoxin] + acetyl-CoA + CO2 + H(+). The polypeptide is Pyruvate synthase subunit PorB (porB) (Methanothermobacter marburgensis (strain ATCC BAA-927 / DSM 2133 / JCM 14651 / NBRC 100331 / OCM 82 / Marburg) (Methanobacterium thermoautotrophicum)).